Consider the following 31-residue polypeptide: U13-ctenitoxin-Pn1b (31 aa).

Cystine bridges form between Cys3–Cys17, Cys10–Cys21, and Cys16–Cys30.

As to expression, expressed by the venom gland.

The protein localises to the secreted. In terms of biological role, acts as a neurotoxin. This is U13-ctenitoxin-Pn1b from Phoneutria nigriventer (Brazilian armed spider).